Consider the following 365-residue polypeptide: UPF0324 membrane protein Cj0999c (365 aa).

Transmembrane regions (helical) follow at residues 12–34 (IVRS…MYLS), 44–63 (HLAA…PWFF), 83–100 (LGIV…LLSV), 105–127 (FLLS…TKIF), 134–153 (SMLV…LALE), 163–185 (GILA…PIAF), 197–219 (AMGV…AEMA), 234–256 (VIIK…YFFA), 269–288 (SITI…LNTY), 303–325 (IISL…LGLQ), and 338–360 (VFGL…TLAF).

Belongs to the UPF0324 family.

Its subcellular location is the cell membrane. In Campylobacter jejuni subsp. jejuni serotype O:2 (strain ATCC 700819 / NCTC 11168), this protein is UPF0324 membrane protein Cj0999c.